The following is a 606-amino-acid chain: DNA mismatch repair protein MutL (606 aa).

Positions 350–371 are disordered; it reads GWRPSAPSAPWTPEASPSRPYQ.

This sequence belongs to the DNA mismatch repair MutL/HexB family.

Functionally, this protein is involved in the repair of mismatches in DNA. It is required for dam-dependent methyl-directed DNA mismatch repair. May act as a 'molecular matchmaker', a protein that promotes the formation of a stable complex between two or more DNA-binding proteins in an ATP-dependent manner without itself being part of a final effector complex. The polypeptide is DNA mismatch repair protein MutL (Rhizobium rhizogenes (strain K84 / ATCC BAA-868) (Agrobacterium radiobacter)).